The following is a 161-amino-acid chain: Nucleotide-binding protein Shal_3198 (161 aa).

Belongs to the YajQ family.

In terms of biological role, nucleotide-binding protein. The polypeptide is Nucleotide-binding protein Shal_3198 (Shewanella halifaxensis (strain HAW-EB4)).